A 376-amino-acid polypeptide reads, in one-letter code: Chaperone protein DnaJ (376 aa).

The J domain maps to 4-69 (DFYETLGVQK…QKRAAYDRFG (66 aa)). The segment at 133–211 (GKTAQIRVPA…CAGQGRVTEE (79 aa)) adopts a CR-type zinc-finger fold. Cys146, Cys149, Cys163, Cys166, Cys185, Cys188, Cys199, and Cys202 together coordinate Zn(2+). CXXCXGXG motif repeat units follow at residues 146-153 (CTECSGSG), 163-170 (CSMCHGHG), 185-192 (CPQCQGRG), and 199-206 (CPKCAGQG).

Belongs to the DnaJ family. Homodimer. Requires Zn(2+) as cofactor.

The protein localises to the cytoplasm. In terms of biological role, participates actively in the response to hyperosmotic and heat shock by preventing the aggregation of stress-denatured proteins and by disaggregating proteins, also in an autonomous, DnaK-independent fashion. Unfolded proteins bind initially to DnaJ; upon interaction with the DnaJ-bound protein, DnaK hydrolyzes its bound ATP, resulting in the formation of a stable complex. GrpE releases ADP from DnaK; ATP binding to DnaK triggers the release of the substrate protein, thus completing the reaction cycle. Several rounds of ATP-dependent interactions between DnaJ, DnaK and GrpE are required for fully efficient folding. Also involved, together with DnaK and GrpE, in the DNA replication of plasmids through activation of initiation proteins. The sequence is that of Chaperone protein DnaJ from Mesorhizobium japonicum (strain LMG 29417 / CECT 9101 / MAFF 303099) (Mesorhizobium loti (strain MAFF 303099)).